A 139-amino-acid polypeptide reads, in one-letter code: Actin-depolymerizing factor 1 (139 aa).

An ADF-H domain is found at 5 to 139 (ASGMAVCDEC…SMDIVKSRAL (135 aa)).

It belongs to the actin-binding proteins ADF family.

In terms of biological role, actin-depolymerizing protein. Severs actin filaments (F-actin) and binds to actin monomers. This is Actin-depolymerizing factor 1 (ADF1) from Oryza sativa subsp. japonica (Rice).